A 257-amino-acid chain; its full sequence is Leucine-rich repeat-containing protein 3 (257 aa).

The first 32 residues, 1–32 (MGTVRPPRPSLLLVSTRESCLFLLFCLHLGAA), serve as a signal peptide directing secretion. One can recognise an LRRNT domain in the interval 33–64 (CPQPCRCPDHAGAVAVFCSLRGLQEVPEDIPA). 4 LRR repeats span residues 65–86 (NTVLLKLDANKISHLPDGAFQH), 89–110 (RLRELDLSHNAIEAIGSATFAG), 114–135 (GLRLLDLSYNRIQRIPKDALGK), and 136–157 (LSAKIRLSHNPLHCECALQEAL). A helical transmembrane segment spans residues 205 to 225 (VAMLVTMFGWFAMVIAYVVYY).

It belongs to the LRRC3 family. As to expression, widely expressed; detected in testis, lung, small intestine, breast, brain, heart, bone marrow, placenta, colon, fetal brain, liver, fetal liver, thymus, salivary gland, spinal cord, spleen, trachea and adrenal gland.

It localises to the membrane. This chain is Leucine-rich repeat-containing protein 3 (LRRC3), found in Homo sapiens (Human).